The primary structure comprises 157 residues: Urease accessory protein UreE (157 aa).

Belongs to the UreE family.

Its subcellular location is the cytoplasm. In terms of biological role, involved in urease metallocenter assembly. Binds nickel. Probably functions as a nickel donor during metallocenter assembly. This Corynebacterium glutamicum (strain R) protein is Urease accessory protein UreE.